Reading from the N-terminus, the 190-residue chain is MPKASEVKKGTAIDFNGRVLVVKDIVRSVPQGRAGGSLYRMRLYDVVTGSKVDETFKDSDMLTLADLTRREAMLSYIDGDEYVFMDNEDYTPYNLSKDAISEEILFVNEETQGVHVIVIDGAPVGLDLPSSVELVVEETDPSIKGASASARSKPARMSTGLNISVPEHISTGDRIRINTAEHKFMGRAEK.

The protein belongs to the elongation factor P family.

The chain is Elongation factor P-like protein from Pseudoalteromonas translucida (strain TAC 125).